Reading from the N-terminus, the 40-residue chain is Mu-thomitoxin-Hme1b (40 aa).

3 disulfides stabilise this stretch: cysteine 2-cysteine 18, cysteine 9-cysteine 22, and cysteine 17-cysteine 33.

This sequence belongs to the neurotoxin 19 (CSTX) family. Post-translationally, contains 3 disulfide bonds. As to expression, expressed by the venom gland.

Its subcellular location is the secreted. In terms of biological role, blocks the Nav1.2/SCN2A, Nav1.4/SCN4A, Nav1.5/SCN5A and Nav1.6/SCN8A sodium channels. Shows a slight preference for the Nav1.2 and Nav1.4 channels. Reduces the peak amplitude of the sodium current and negatively shifts the steady-state inactivation process. Does not shift the threshold potential of activation or the voltage corresponding to maximal current. Does not change the reversal potential of the sodium current. May act on site 1 of the receptor. The polypeptide is Mu-thomitoxin-Hme1b (Heriaeus mellotteei (Crab spider)).